Here is a 685-residue protein sequence, read N- to C-terminus: E3 ubiquitin ligase Rnf157 (685 aa).

A lipid anchor (N-myristoyl glycine) is attached at glycine 2. Residues 276–315 (ECVVCLSDVRDTLILPCRHLCLCNTCADTLRYQANNCPIC) form an RING-type zinc finger. Positions 329–332 (RKKL) match the D-box 1 motif. 3 disordered regions span residues 339–361 (SFNP…ENIP), 433–584 (LSKS…AGEQ), and 650–672 (LGGR…EASA). A compositionally biased stretch (low complexity) spans 434–443 (SKSISQNSSV). Residues 478–537 (ESENLTLSSSGAVDQSSCTGTPLSSTISSPEDPASSSLAQSVMSMASSQISTDTVSSMSG) show a composition bias toward polar residues. Residues 552–561 (PSPRAASRAP) show a composition bias toward low complexity. Residues 657-660 (ARPR) carry the D-box 2 motif.

Interacts with APBB1. Interacts with CHD1; CHD1-binding controls RNF157 stability. Also interacts with ATRN, MEGF8, TECR, MSI2, PLRG1, BYSL, MTERF3, PSMA1, MRPS18B, PRPF4, FASTKD2, SLC25A1, SMU1, CNOT9, MRPS2, MAGT1, FXR2, EMD, PSMD8, HDAC1, RAN, HSD17B12, TXNDC5 and MRPL19.

The protein resides in the cytoplasm. It carries out the reaction S-ubiquitinyl-[E2 ubiquitin-conjugating enzyme]-L-cysteine + [acceptor protein]-L-lysine = [E2 ubiquitin-conjugating enzyme]-L-cysteine + N(6)-ubiquitinyl-[acceptor protein]-L-lysine.. Functionally, E3 ubiquitin ligase that ubiquitinates APBB1 for its degradation by the proteasome and thus prevents apoptosis and promotes survival of neurons. Has a dual role in neurons as it is also required for dendrite growth and maintenance for which its ligase activity is not critical. May act as a scaffold molecule to regulate this process. Acts as a downstream effector of the interconnected PI3K and MAPK signaling pathways and thus participates in the regulation of the cell cycle. The protein is E3 ubiquitin ligase Rnf157 (Rnf157) of Mus musculus (Mouse).